A 655-amino-acid polypeptide reads, in one-letter code: Proprotein convertase subtilisin/kexin type 4 (655 aa).

Residues 1 to 26 (MRPSQTELWLGLTLTLALLAVRWASA) form the signal peptide. Positions 27-110 (QAPIYVSSWA…QQTLRRRVKR (84 aa)) are excised as a propeptide. In terms of domain architecture, Peptidase S8 spans 123–437 (QWYMNKEIQQ…YGLLDAGLLV (315 aa)). Active-site charge relay system residues include D155, H196, and S370. The P/Homo B domain maps to 446–580 (TKPQKKCAIR…TLLLYGTAED (135 aa)). Residue N472 is glycosylated (N-linked (GlcNAc...) asparagine).

It belongs to the peptidase S8 family. Furin subfamily. As to quaternary structure, the proPCSK4 form interacts with HSPA5; the interaction takes place at the endoplasmic reticulum. In terms of processing, N-glycosylated. Synthesized in the endoplasmic reticulum as a zymogen, is matured by autocatalytic cleavage between the prodomain and the catalytic domain. Expressed abundantly in the testis since postnatal Day 16. In testis, strongly detected in round and elongated spermatids as well as spermatocytes. Also observed in residual bodies engulfed by Sertoli cells at spermatogenic stages VIII and IX. In ovaries, expressed in macrophage-like cells of the ovarian theca, interstitium and corpora lutea.

The protein localises to the cytoplasmic vesicle. The protein resides in the secretory vesicle. Its subcellular location is the acrosome membrane. Functionally, proprotein convertase involved in the processing of hormone and other protein precursors at sites comprised of pairs of basic amino acid residues. In males, important for ADAM2 processing as well as other acrosomal proteins with roles in fertilization and critical for normal fertilization events such as sperm capacitation, acrosome reaction and binding of sperm to zona pellucida. Also plays a role in female fertility, involved in the regulation of trophoblast migration and placental development, may be through the proteolytical processing and activation of proteins such as IGF2. May also participate in folliculogenesis in the ovaries. In Mus musculus (Mouse), this protein is Proprotein convertase subtilisin/kexin type 4 (Pcsk4).